The chain runs to 162 residues: Phosphopantetheine adenylyltransferase (162 aa).

Ser-9 contributes to the substrate binding site. Residues Ser-9–Phe-10 and His-17 contribute to the ATP site. Lys-41, Thr-73, and Arg-87 together coordinate substrate. Residues Gly-88–Arg-90, Glu-98, and Tyr-123–Ser-129 each bind ATP.

The protein belongs to the bacterial CoaD family. In terms of assembly, homohexamer. The cofactor is Mg(2+).

The protein localises to the cytoplasm. It carries out the reaction (R)-4'-phosphopantetheine + ATP + H(+) = 3'-dephospho-CoA + diphosphate. It participates in cofactor biosynthesis; coenzyme A biosynthesis; CoA from (R)-pantothenate: step 4/5. Functionally, reversibly transfers an adenylyl group from ATP to 4'-phosphopantetheine, yielding dephospho-CoA (dPCoA) and pyrophosphate. This is Phosphopantetheine adenylyltransferase from Carboxydothermus hydrogenoformans (strain ATCC BAA-161 / DSM 6008 / Z-2901).